Consider the following 476-residue polypeptide: Glycogen synthase (476 aa).

Residue Lys-15 coordinates ADP-alpha-D-glucose.

It belongs to the glycosyltransferase 1 family. Bacterial/plant glycogen synthase subfamily.

It catalyses the reaction [(1-&gt;4)-alpha-D-glucosyl](n) + ADP-alpha-D-glucose = [(1-&gt;4)-alpha-D-glucosyl](n+1) + ADP + H(+). Its pathway is glycan biosynthesis; glycogen biosynthesis. Synthesizes alpha-1,4-glucan chains using ADP-glucose. This Lactobacillus acidophilus (strain ATCC 700396 / NCK56 / N2 / NCFM) protein is Glycogen synthase.